We begin with the raw amino-acid sequence, 610 residues long: Sodium-coupled monocarboxylate transporter 1 (610 aa).

Residues 1-9 (MDTPRGIGT) lie on the Extracellular side of the membrane. The helical transmembrane segment at 10 to 30 (FVVWDYVVFAGMLVISAAIGI) threads the bilayer. At 31-51 (YYAFAGGGQQTSKDFLMGGRR) the chain is on the cytoplasmic side. A helical membrane pass occupies residues 52-72 (MTAVPVALSLTASFMSAVTVL). At 73–83 (GTPSEVYRFGA) the chain is on the extracellular side. Residues 84 to 104 (IFSIFAFTYFFVVVISAEVFL) traverse the membrane as a helical segment. The Cytoplasmic segment spans residues 105-132 (PVFYKLGITSTYEYLELRFNKCVRLCGT). Residues 133 to 153 (VLFIVQTILYTGIVIYAPALA) traverse the membrane as a helical segment. Residues 154–161 (LNQVTGFD) lie on the Extracellular side of the membrane. The chain crosses the membrane as a helical span at residues 162–182 (LWGAVVATGVVCTFYCTLGGL). Residues 183–189 (KAVIWTD) lie on the Cytoplasmic side of the membrane. A helical membrane pass occupies residues 190–210 (VFQVGIMVAGFASVIIQAVVM). The Extracellular portion of the chain corresponds to 211–239 (QGGISTILNDAYDGGRLNFWNFNPNPLQR). Residues 240 to 260 (HTFWTIIIGGTFTWTSIYGVN) form a helical membrane-spanning segment. Topologically, residues 261–279 (QSQVQRYISCKSRFQAKLS) are cytoplasmic. A helical membrane pass occupies residues 280-300 (LYINLVGLWAILTCSVFCGLA). Over 301 to 336 (LYSRYHDCDPWTAKKVSAPDQLMPYLVLDILQDYPG) the chain is Extracellular. Residues 337 to 359 (LPGLFVACAYSGTLSTVSSSINA) traverse the membrane as a helical segment. At 360–389 (LAAVTVEDLIKPYFRSLSERSLSWISQGMS) the chain is on the cytoplasmic side. The helical transmembrane segment at 390-410 (VVYGALCIGMAALASLMGALL) threads the bilayer. Residues 411-415 (QAALS) lie on the Extracellular side of the membrane. The chain crosses the membrane as a helical span at residues 416 to 436 (VFGMVGGPLMGLFALGILVPF). Topologically, residues 437–439 (ANS) are cytoplasmic. Residues 440–460 (IGALVGLMAGFAISLWVGIGA) traverse the membrane as a helical segment. The Extracellular portion of the chain corresponds to 461–518 (QIYPPLPERTLPLHLDIQGCNSTYNETNLMTTTEMPFTTSVFQIYNVQRTPLMDNWYS). Asn-485 is a glycosylation site (N-linked (GlcNAc...) asparagine). The helical transmembrane segment at 519–539 (LSYLYFSTVGTLVTLLVGILV) threads the bilayer. Over 540 to 610 (SLSTGGRKQN…QSGKSNGTRL (71 aa)) the chain is Cytoplasmic. The interval 585 to 610 (GGTDNPAFNHIELNSDQSGKSNGTRL) is disordered. Residues 596–610 (ELNSDQSGKSNGTRL) show a composition bias toward polar residues. Positions 608 to 610 (TRL) match the PDZ-binding motif.

Belongs to the sodium:solute symporter (SSF) (TC 2.A.21) family. Interacts (via PDZ-binding motif) with PDZK1 (via PDZ domains 1 and 3); interaction increases nicotinate transport activity of SLC5A8. In terms of tissue distribution, expressed in normal thyroid, localized at the apical pole of thyroid cells facing the colloid lumen, but expression profoundly decreased in thyroid carcinomas. Expressed in normal colon but absent in colon aberrant crypt foci and colon cancers. Present in normal kidney cortex, brain, prostate, gastric mucosa and breast tissue but was significantly down-regulated in primary gliomas, gastric cancer, prostate tumors and breast tumors.

Its subcellular location is the apical cell membrane. The enzyme catalyses (S)-lactate(out) + 2 Na(+)(out) = (S)-lactate(in) + 2 Na(+)(in). It catalyses the reaction propanoate(out) + 2 Na(+)(out) = propanoate(in) + 2 Na(+)(in). The catalysed reaction is pyruvate(out) + 2 Na(+)(out) = pyruvate(in) + 2 Na(+)(in). It carries out the reaction acetate(out) + 2 Na(+)(out) = acetate(in) + 2 Na(+)(in). The enzyme catalyses butanoate(out) + 2 Na(+)(out) = butanoate(in) + 2 Na(+)(in). It catalyses the reaction nicotinate(out) + 2 Na(+)(out) = nicotinate(in) + 2 Na(+)(in). The catalysed reaction is (R)-3-hydroxybutanoate(out) + 2 Na(+)(out) = (R)-3-hydroxybutanoate(in) + 2 Na(+)(in). It carries out the reaction acetoacetate(out) + 2 Na(+)(out) = acetoacetate(in) + 2 Na(+)(in). The enzyme catalyses 4-methyl-2-oxopentanoate(out) + 2 Na(+)(out) = 4-methyl-2-oxopentanoate(in) + 2 Na(+)(in). It catalyses the reaction 5-oxo-L-proline(out) + 2 Na(+)(out) = 5-oxo-L-proline(in) + 2 Na(+)(in). The catalysed reaction is iodide(out) = iodide(in). It carries out the reaction chloride(in) = chloride(out). The enzyme catalyses nitrate(in) = nitrate(out). It catalyses the reaction bromide(in) = bromide(out). Increase of iodide influx inhibited by addition of perchlorate (NaClO(4)), a competitive inhibitor of iodide uptake catalyzed by sodium iodide symporter (NIS). Cotransport of monocarboxylates and nicotinate strongly inhibited by probenecid, nonsteroid anti-inflammatory drugs (ibuprofen, fenoprofen, ketprofen, naproxen) in a Na(+)-dependent manner or by prolonged exposure to external concentrations of monocarboxylates. Acts as an electrogenic sodium (Na(+)) and chloride (Cl-)-dependent sodium-coupled solute transporter, including transport of monocarboxylates (short-chain fatty acids including L-lactate, D-lactate, pyruvate, acetate, propionate, valerate and butyrate), mocarboxylate drugs (nicotinate, benzoate, salicylate and 5-aminosalicylate) and ketone bodies (beta-D-hydroxybutyrate, acetoacetate and alpha-ketoisocaproate), with a Na(+):substrate stoichiometry of between 4:1 and 2:1. Catalyzes passive carrier mediated diffusion of iodide. Mediates iodide transport from the thyrocyte into the colloid lumen through the apical membrane. May be responsible for the absorption of D-lactate and monocarboxylate drugs from the intestinal tract. Acts as a tumor suppressor, suppressing colony formation in colon cancer, prostate cancer and glioma cell lines. May play a critical role in the entry of L-lactate and ketone bodies into neurons by a process driven by an electrochemical Na(+) gradient and hence contribute to the maintenance of the energy status and function of neurons. Mediates sodium-coupled electrogenic transport of pyroglutamate (5-oxo-L-proline). Can mediate the transport of chloride, bromide, iodide and nitrate ions when the external concentration of sodium ions is reduced. This is Sodium-coupled monocarboxylate transporter 1 from Homo sapiens (Human).